Consider the following 127-residue polypeptide: Aspartate 1-decarboxylase (127 aa).

Ser25 serves as the catalytic Schiff-base intermediate with substrate; via pyruvic acid. A Pyruvic acid (Ser) modification is found at Ser25. Thr57 is a binding site for substrate. Residue Tyr58 is the Proton donor of the active site. 73–75 is a binding site for substrate; sequence GAA.

It belongs to the PanD family. Heterooctamer of four alpha and four beta subunits. Requires pyruvate as cofactor. Post-translationally, is synthesized initially as an inactive proenzyme, which is activated by self-cleavage at a specific serine bond to produce a beta-subunit with a hydroxyl group at its C-terminus and an alpha-subunit with a pyruvoyl group at its N-terminus.

The protein localises to the cytoplasm. The enzyme catalyses L-aspartate + H(+) = beta-alanine + CO2. Its pathway is cofactor biosynthesis; (R)-pantothenate biosynthesis; beta-alanine from L-aspartate: step 1/1. Catalyzes the pyruvoyl-dependent decarboxylation of aspartate to produce beta-alanine. This chain is Aspartate 1-decarboxylase, found in Vesicomyosocius okutanii subsp. Calyptogena okutanii (strain HA).